Here is a 497-residue protein sequence, read N- to C-terminus: Probable malate:quinone oxidoreductase (497 aa).

It belongs to the MQO family. FAD serves as cofactor.

It carries out the reaction (S)-malate + a quinone = a quinol + oxaloacetate. Its pathway is carbohydrate metabolism; tricarboxylic acid cycle; oxaloacetate from (S)-malate (quinone route): step 1/1. This Flavobacterium johnsoniae (strain ATCC 17061 / DSM 2064 / JCM 8514 / BCRC 14874 / CCUG 350202 / NBRC 14942 / NCIMB 11054 / UW101) (Cytophaga johnsonae) protein is Probable malate:quinone oxidoreductase.